The chain runs to 449 residues: UDP-N-acetylglucosamine 1-carboxyvinyltransferase (449 aa).

Basic and acidic residues predominate over residues 1 to 12 (MQVTVNEHDAVE). The segment at 1 to 30 (MQVTVNEHDAVERVATATPAGNREAHAHGT) is disordered. Residue 51-52 (KN) participates in phosphoenolpyruvate binding. Arg121 is a binding site for UDP-N-acetyl-alpha-D-glucosamine. The active-site Proton donor is the Cys145. Cys145 carries the 2-(S-cysteinyl)pyruvic acid O-phosphothioketal modification. UDP-N-acetyl-alpha-D-glucosamine is bound by residues 150–154 (RPVDQ), Asp333, and Ile355.

This sequence belongs to the EPSP synthase family. MurA subfamily.

The protein resides in the cytoplasm. The enzyme catalyses phosphoenolpyruvate + UDP-N-acetyl-alpha-D-glucosamine = UDP-N-acetyl-3-O-(1-carboxyvinyl)-alpha-D-glucosamine + phosphate. Its pathway is cell wall biogenesis; peptidoglycan biosynthesis. In terms of biological role, cell wall formation. Adds enolpyruvyl to UDP-N-acetylglucosamine. This chain is UDP-N-acetylglucosamine 1-carboxyvinyltransferase, found in Burkholderia pseudomallei (strain 1710b).